A 134-amino-acid polypeptide reads, in one-letter code: uncharacterized protein (134 aa).

A helical transmembrane segment spans residues 13–35 (FFIAFSAYLVVILLMTAVSVYYL).

The protein resides in the membrane. This is an uncharacterized protein from Archaeoglobus fulgidus (strain ATCC 49558 / DSM 4304 / JCM 9628 / NBRC 100126 / VC-16).